Here is a 442-residue protein sequence, read N- to C-terminus: Putative pyrimidine permease RutG (442 aa).

The Cytoplasmic portion of the chain corresponds to 1–57; the sequence is MAMFGFPHWQLKSTSTESGVVAPDERLPFAQTAVMGVQHAVAMFGATVLMPILMGLD. A helical transmembrane segment spans residues 58–78; that stretch reads PNLSILMSGIGTLLFFFITGG. Residue R79 is a topological domain, periplasmic. The chain crosses the membrane as a helical span at residues 80-100; sequence VPSYLGSSAAFVGVVIAATGF. The Cytoplasmic segment spans residues 101–110; that stretch reads NGQGINPNIS. A helical transmembrane segment spans residues 111–131; the sequence is IALGGIIACGLVYTVIGLVVM. Residues 132–140 are Periplasmic-facing; it reads KIGTRWIER. A helical transmembrane segment spans residues 141–161; sequence LMPPVVTGAVVMAIGLNLAPI. At 162-169 the chain is on the cytoplasmic side; it reads AVKSVSAS. Residues 170-190 traverse the membrane as a helical segment; the sequence is AFDSWMAVMTVLCIGLVAVFT. The Periplasmic portion of the chain corresponds to 191-196; it reads RGMIQR. The chain crosses the membrane as a helical span at residues 197-217; the sequence is LLILVGLIVACLLYGVMTNVL. The Cytoplasmic portion of the chain corresponds to 218 to 240; it reads GLGKAVDFTLVSHAAWFGLPHFS. Residues 241 to 261 form a helical membrane-spanning segment; that stretch reads TPAFNGQAMMLIAPVAVILVA. Residues 262–284 are Periplasmic-facing; it reads ENLGHLKAVAGMTGRNMDPYMGR. The chain crosses the membrane as a helical span at residues 285 to 305; that stretch reads AFVGDGLATMLSGSVGGSGVT. At 306 to 318 the chain is on the cytoplasmic side; the sequence is TYAENIGVMAVTK. The helical transmembrane segment at 319–339 threads the bilayer; sequence VYSTLVFVAAAVIAMLLGFSP. Over 340–347 the chain is Periplasmic; it reads KFGALIHT. Residues 348–368 traverse the membrane as a helical segment; it reads IPAAVIGGASIVVFGLIAVAG. Residues 369–385 lie on the Cytoplasmic side of the membrane; the sequence is ARIWVQNRVDLSQNGNL. Helical transmembrane passes span 386–406 and 407–427; these read IMVA…LGGF and TLGG…LLSR. The Cytoplasmic portion of the chain corresponds to 428–442; sequence KLVDVPPPEVVHQEP.

The protein belongs to the nucleobase:cation symporter-2 (NCS2) (TC 2.A.40) family.

It is found in the cell inner membrane. Its function is as follows. May function as a proton-driven pyrimidine uptake system. This is Putative pyrimidine permease RutG (rutG) from Escherichia coli (strain K12).